Here is a 336-residue protein sequence, read N- to C-terminus: Ketol-acid reductoisomerase (NADP(+)) 1 (336 aa).

The region spanning 2–181 (AKVYYEKDVT…GATRAGVLET (180 aa)) is the KARI N-terminal Rossmann domain. NADP(+) is bound by residues 25–28 (YGSQ), arginine 48, serine 52, and 82–85 (DELQ). The active site involves histidine 107. Position 133 (glycine 133) interacts with NADP(+). The KARI C-terminal knotted domain occupies 182–327 (TFKEETETDL…RKLREMMPFV (146 aa)). Positions 190, 194, 226, and 230 each coordinate Mg(2+). Serine 251 contacts substrate.

The protein belongs to the ketol-acid reductoisomerase family. It depends on Mg(2+) as a cofactor.

The catalysed reaction is (2R)-2,3-dihydroxy-3-methylbutanoate + NADP(+) = (2S)-2-acetolactate + NADPH + H(+). The enzyme catalyses (2R,3R)-2,3-dihydroxy-3-methylpentanoate + NADP(+) = (S)-2-ethyl-2-hydroxy-3-oxobutanoate + NADPH + H(+). It participates in amino-acid biosynthesis; L-isoleucine biosynthesis; L-isoleucine from 2-oxobutanoate: step 2/4. The protein operates within amino-acid biosynthesis; L-valine biosynthesis; L-valine from pyruvate: step 2/4. In terms of biological role, involved in the biosynthesis of branched-chain amino acids (BCAA). Catalyzes an alkyl-migration followed by a ketol-acid reduction of (S)-2-acetolactate (S2AL) to yield (R)-2,3-dihydroxy-isovalerate. In the isomerase reaction, S2AL is rearranged via a Mg-dependent methyl migration to produce 3-hydroxy-3-methyl-2-ketobutyrate (HMKB). In the reductase reaction, this 2-ketoacid undergoes a metal-dependent reduction by NADPH to yield (R)-2,3-dihydroxy-isovalerate. This Bacillus thuringiensis subsp. konkukian (strain 97-27) protein is Ketol-acid reductoisomerase (NADP(+)) 1.